Reading from the N-terminus, the 434-residue chain is Eukaryotic peptide chain release factor subunit 1-2 (434 aa).

At Ala2 the chain carries N-acetylalanine.

This sequence belongs to the eukaryotic release factor 1 family. Heterodimer of two subunits, one of which binds GTP.

Its subcellular location is the cytoplasm. In terms of biological role, directs the termination of nascent peptide synthesis (translation) in response to the termination codons UAA, UAG and UGA. Modulates plant growth and development. In Arabidopsis thaliana (Mouse-ear cress), this protein is Eukaryotic peptide chain release factor subunit 1-2.